The following is a 108-amino-acid chain: Pyrimidine/purine nucleoside phosphorylase (108 aa).

It belongs to the nucleoside phosphorylase PpnP family.

The catalysed reaction is a purine D-ribonucleoside + phosphate = a purine nucleobase + alpha-D-ribose 1-phosphate. It carries out the reaction adenosine + phosphate = alpha-D-ribose 1-phosphate + adenine. The enzyme catalyses cytidine + phosphate = cytosine + alpha-D-ribose 1-phosphate. It catalyses the reaction guanosine + phosphate = alpha-D-ribose 1-phosphate + guanine. The catalysed reaction is inosine + phosphate = alpha-D-ribose 1-phosphate + hypoxanthine. It carries out the reaction thymidine + phosphate = 2-deoxy-alpha-D-ribose 1-phosphate + thymine. The enzyme catalyses uridine + phosphate = alpha-D-ribose 1-phosphate + uracil. It catalyses the reaction xanthosine + phosphate = alpha-D-ribose 1-phosphate + xanthine. Its function is as follows. Catalyzes the phosphorolysis of diverse nucleosides, yielding D-ribose 1-phosphate and the respective free bases. Can use uridine, adenosine, guanosine, cytidine, thymidine, inosine and xanthosine as substrates. Also catalyzes the reverse reactions. In Polaromonas naphthalenivorans (strain CJ2), this protein is Pyrimidine/purine nucleoside phosphorylase.